Here is a 343-residue protein sequence, read N- to C-terminus: Ribosomal RNA small subunit methyltransferase C (343 aa).

Belongs to the methyltransferase superfamily. RsmC family. In terms of assembly, monomer.

It localises to the cytoplasm. The enzyme catalyses guanosine(1207) in 16S rRNA + S-adenosyl-L-methionine = N(2)-methylguanosine(1207) in 16S rRNA + S-adenosyl-L-homocysteine + H(+). Functionally, specifically methylates the guanine in position 1207 of 16S rRNA in the 30S particle. The chain is Ribosomal RNA small subunit methyltransferase C from Pseudoalteromonas atlantica (strain T6c / ATCC BAA-1087).